The sequence spans 248 residues: Protein maestro (248 aa).

Positions 1–23 (MEQTRKIPNQPLPTPTSQSKKRR) are disordered. The HEAT repeat unit spans residues 128–163 (SFFIDITLQARTLLDDEDDSVRYSAFVLFGQLASFA).

As to expression, prominent expression seen in testis, brain, liver and heart. Weakly expressed in the kidney.

It is found in the nucleus. The protein localises to the nucleolus. The chain is Protein maestro (Mro) from Mus musculus (Mouse).